A 344-amino-acid polypeptide reads, in one-letter code: Anthranilate phosphoribosyltransferase (344 aa).

Residues Gly84, Gly87–Asp88, Thr92, Asn94–Thr97, Lys112–Ser120, and Ser124 contribute to the 5-phospho-alpha-D-ribose 1-diphosphate site. Residue Gly84 participates in anthranilate binding. A Mg(2+)-binding site is contributed by Ser96. Asn115 contacts anthranilate. An anthranilate-binding site is contributed by Arg170. Positions 229 and 230 each coordinate Mg(2+).

Belongs to the anthranilate phosphoribosyltransferase family. Homodimer. Mg(2+) is required as a cofactor.

The enzyme catalyses N-(5-phospho-beta-D-ribosyl)anthranilate + diphosphate = 5-phospho-alpha-D-ribose 1-diphosphate + anthranilate. The protein operates within amino-acid biosynthesis; L-tryptophan biosynthesis; L-tryptophan from chorismate: step 2/5. In terms of biological role, catalyzes the transfer of the phosphoribosyl group of 5-phosphorylribose-1-pyrophosphate (PRPP) to anthranilate to yield N-(5'-phosphoribosyl)-anthranilate (PRA). This Xylella fastidiosa (strain M23) protein is Anthranilate phosphoribosyltransferase.